The sequence spans 470 residues: UDP-glycosyltransferase 72D1 (470 aa).

Residues serine 276, 343 to 345 (APQ), 360 to 368 (HCGWSSALE), and 382 to 385 (YAEQ) contribute to the UDP-alpha-D-glucose site.

The protein belongs to the UDP-glycosyltransferase family.

The protein is UDP-glycosyltransferase 72D1 (UGT72D1) of Arabidopsis thaliana (Mouse-ear cress).